A 577-amino-acid polypeptide reads, in one-letter code: Isocitrate dehydrogenase kinase/phosphatase (577 aa).

Residues 315–321 and lysine 336 each bind ATP; that span reads APGIRGM. Aspartate 371 is an active-site residue.

It belongs to the AceK family.

It is found in the cytoplasm. The catalysed reaction is L-seryl-[isocitrate dehydrogenase] + ATP = O-phospho-L-seryl-[isocitrate dehydrogenase] + ADP + H(+). Functionally, bifunctional enzyme which can phosphorylate or dephosphorylate isocitrate dehydrogenase (IDH) on a specific serine residue. This is a regulatory mechanism which enables bacteria to bypass the Krebs cycle via the glyoxylate shunt in response to the source of carbon. When bacteria are grown on glucose, IDH is fully active and unphosphorylated, but when grown on acetate or ethanol, the activity of IDH declines drastically concomitant with its phosphorylation. This chain is Isocitrate dehydrogenase kinase/phosphatase, found in Escherichia fergusonii (strain ATCC 35469 / DSM 13698 / CCUG 18766 / IAM 14443 / JCM 21226 / LMG 7866 / NBRC 102419 / NCTC 12128 / CDC 0568-73).